The primary structure comprises 89 residues: Small ribosomal subunit protein uS15 (89 aa).

This sequence belongs to the universal ribosomal protein uS15 family. Part of the 30S ribosomal subunit. Forms a bridge to the 50S subunit in the 70S ribosome, contacting the 23S rRNA.

Its function is as follows. One of the primary rRNA binding proteins, it binds directly to 16S rRNA where it helps nucleate assembly of the platform of the 30S subunit by binding and bridging several RNA helices of the 16S rRNA. Forms an intersubunit bridge (bridge B4) with the 23S rRNA of the 50S subunit in the ribosome. The chain is Small ribosomal subunit protein uS15 from Rhizobium rhizogenes (strain K84 / ATCC BAA-868) (Agrobacterium radiobacter).